Consider the following 105-residue polypeptide: Small ribosomal subunit protein uS10 (105 aa).

This sequence belongs to the universal ribosomal protein uS10 family. Part of the 30S ribosomal subunit.

Involved in the binding of tRNA to the ribosomes. The sequence is that of Small ribosomal subunit protein uS10 from Rickettsia typhi (strain ATCC VR-144 / Wilmington).